A 296-amino-acid polypeptide reads, in one-letter code: uncharacterized protein (296 aa).

An N-terminal signal peptide occupies residues 1–20 (MRKFIFVLLTLLLVSPFSFA).

This is an uncharacterized protein from Escherichia coli (strain K12).